The following is a 335-amino-acid chain: Holliday junction branch migration complex subunit RuvB (335 aa).

The interval methionine 1–tyrosine 183 is large ATPase domain (RuvB-L). ATP is bound by residues leucine 22, arginine 23, glycine 64, lysine 67, threonine 68, threonine 69, glutamate 130–tyrosine 132, arginine 173, tyrosine 183, and arginine 220. Threonine 68 provides a ligand contact to Mg(2+). A small ATPAse domain (RuvB-S) region spans residues threonine 184–glutamine 254. The interval proline 257–valine 335 is head domain (RuvB-H). Arginine 293, arginine 312, and arginine 317 together coordinate DNA.

Belongs to the RuvB family. In terms of assembly, homohexamer. Forms an RuvA(8)-RuvB(12)-Holliday junction (HJ) complex. HJ DNA is sandwiched between 2 RuvA tetramers; dsDNA enters through RuvA and exits via RuvB. An RuvB hexamer assembles on each DNA strand where it exits the tetramer. Each RuvB hexamer is contacted by two RuvA subunits (via domain III) on 2 adjacent RuvB subunits; this complex drives branch migration. In the full resolvosome a probable DNA-RuvA(4)-RuvB(12)-RuvC(2) complex forms which resolves the HJ.

It localises to the cytoplasm. It carries out the reaction ATP + H2O = ADP + phosphate + H(+). The RuvA-RuvB-RuvC complex processes Holliday junction (HJ) DNA during genetic recombination and DNA repair, while the RuvA-RuvB complex plays an important role in the rescue of blocked DNA replication forks via replication fork reversal (RFR). RuvA specifically binds to HJ cruciform DNA, conferring on it an open structure. The RuvB hexamer acts as an ATP-dependent pump, pulling dsDNA into and through the RuvAB complex. RuvB forms 2 homohexamers on either side of HJ DNA bound by 1 or 2 RuvA tetramers; 4 subunits per hexamer contact DNA at a time. Coordinated motions by a converter formed by DNA-disengaged RuvB subunits stimulates ATP hydrolysis and nucleotide exchange. Immobilization of the converter enables RuvB to convert the ATP-contained energy into a lever motion, pulling 2 nucleotides of DNA out of the RuvA tetramer per ATP hydrolyzed, thus driving DNA branch migration. The RuvB motors rotate together with the DNA substrate, which together with the progressing nucleotide cycle form the mechanistic basis for DNA recombination by continuous HJ branch migration. Branch migration allows RuvC to scan DNA until it finds its consensus sequence, where it cleaves and resolves cruciform DNA. The protein is Holliday junction branch migration complex subunit RuvB of Listeria monocytogenes serotype 4a (strain HCC23).